Reading from the N-terminus, the 493-residue chain is Occludin (493 aa).

The Cytoplasmic portion of the chain corresponds to 1-47 (MYSRPSNYAPSKDVYGGEMRSQPAYSYYPEEEIQHFYRWSSPPGIIK). An MARVEL domain is found at 41-250 (SPPGIIKIMS…IIFFAVKTRK (210 aa)). A helical membrane pass occupies residues 48–70 (IMSILIVVMCVGIFACVASTLPW). The Extracellular segment spans residues 71–116 (DLDITGQSMGYGMGSGSYSGGYTGYGFGGSQMGLGFAYGGNYTDPR). The helical transmembrane segment at 117-141 (AAKGFILAMAAFCFIIGLVIFVMLV) threads the bilayer. The Cytoplasmic segment spans residues 142-151 (TRTPLSTSRK). The helical transmembrane segment at 152-176 (FYLIVIIVSAIIGGLVFIATIVYTV) threads the bilayer. Over 177–224 (GVNPVAQASGSAFYTQIVSICNQFYSPVQTGVFVNQYLYHYCVVEPQE) the chain is Extracellular. Cysteine 197 and cysteine 218 form a disulfide bridge. The helical transmembrane segment at 225–246 (AIAIVLGFLIVVAFAIIIFFAV) threads the bilayer. At 247–493 (KTRKKINQYG…IKQMVSNYDK (247 aa)) the chain is on the cytoplasmic side. Residues 334–407 (YGMSPRHYSS…TKQRQEYKQE (74 aa)) are disordered. Basic residues predominate over residues 352-361 (APPKKRPGKP). A Phosphothreonine; by CK2; in vitro modification is found at threonine 375. Serine 379 carries the phosphoserine; by CK2; in vitro modification. A compositionally biased stretch (acidic residues) spans 379-389 (SADELEDDSWD). In terms of domain architecture, OCEL spans 386-493 (DSWDSEYPPI…IKQMVSNYDK (108 aa)). Residues 396 to 428 (TQTKQRQEYKQEFASDLHEYKRLQAELDELSKI) adopt a coiled-coil conformation.

This sequence belongs to the ELL/occludin family. In terms of assembly, interacts in vitro with cingulin, possibly directly. Interacts with ZO-1. Post-translationally, phosphorylated. Localized at tight junctions of both epithelial and endothelial cells.

It localises to the cell membrane. Its subcellular location is the cell junction. The protein resides in the tight junction. Probably plays a role in the formation and regulation of the tight junction (TJ) paracellular permeability barrier. This Xenopus laevis (African clawed frog) protein is Occludin (ocln).